The sequence spans 111 residues: Flagellar hook-basal body complex protein FliE (111 aa).

The protein belongs to the FliE family.

The protein localises to the bacterial flagellum basal body. In Clostridium acetobutylicum (strain ATCC 824 / DSM 792 / JCM 1419 / IAM 19013 / LMG 5710 / NBRC 13948 / NRRL B-527 / VKM B-1787 / 2291 / W), this protein is Flagellar hook-basal body complex protein FliE.